Here is a 702-residue protein sequence, read N- to C-terminus: Methionine--tRNA ligase (702 aa).

The short motif at 23 to 33 (PYANGPLHLGH) is the 'HIGH' region element. 4 residues coordinate Zn(2+): cysteine 154, cysteine 157, cysteine 167, and cysteine 170. Positions 341–345 (KMSKS) match the 'KMSKS' region motif. Lysine 344 is an ATP binding site. The tract at residues 562–593 (LAPPPASAKQQNASMSNTAPPPTAEEPETTAP) is disordered. The segment covering 569 to 578 (AKQQNASMSN) has biased composition (polar residues). One can recognise a tRNA-binding domain in the interval 599–702 (DFAKLDLRIG…SSAQPGMPVR (104 aa)).

This sequence belongs to the class-I aminoacyl-tRNA synthetase family. MetG type 1 subfamily. As to quaternary structure, homodimer. It depends on Zn(2+) as a cofactor.

It is found in the cytoplasm. The catalysed reaction is tRNA(Met) + L-methionine + ATP = L-methionyl-tRNA(Met) + AMP + diphosphate. In terms of biological role, is required not only for elongation of protein synthesis but also for the initiation of all mRNA translation through initiator tRNA(fMet) aminoacylation. The sequence is that of Methionine--tRNA ligase from Xylella fastidiosa (strain M12).